Consider the following 193-residue polypeptide: NADH-quinone oxidoreductase subunit B (193 aa).

Residues 1-11 (MGLTGTNTTLV) show a composition bias toward polar residues. Positions 1-23 (MGLTGTNTTLVAPQPKGILDPRT) are disordered. [4Fe-4S] cluster contacts are provided by cysteine 72, cysteine 73, cysteine 137, and cysteine 167.

It belongs to the complex I 20 kDa subunit family. As to quaternary structure, NDH-1 is composed of 14 different subunits. Subunits NuoB, C, D, E, F, and G constitute the peripheral sector of the complex. [4Fe-4S] cluster is required as a cofactor.

Its subcellular location is the cell inner membrane. It catalyses the reaction a quinone + NADH + 5 H(+)(in) = a quinol + NAD(+) + 4 H(+)(out). In terms of biological role, NDH-1 shuttles electrons from NADH, via FMN and iron-sulfur (Fe-S) centers, to quinones in the respiratory chain. Couples the redox reaction to proton translocation (for every two electrons transferred, four hydrogen ions are translocated across the cytoplasmic membrane), and thus conserves the redox energy in a proton gradient. This Brucella canis (strain ATCC 23365 / NCTC 10854 / RM-666) protein is NADH-quinone oxidoreductase subunit B.